A 314-amino-acid polypeptide reads, in one-letter code: PDZ domain-containing protein GIPC2 (314 aa).

The segment covering 1 to 12 has biased composition (basic residues); sequence MPLGLRGKKKAA. Residues 1-36 form a disordered region; it reads MPLGLRGKKKAAKSKETARLVEGERSGGSQGVPGPP. Residues 13–25 show a composition bias toward basic and acidic residues; it reads KSKETARLVEGER. One can recognise a PDZ domain in the interval 117–197; sequence EVNVYKSEDS…EELFTLQLIE (81 aa).

It belongs to the GIPC family. In terms of assembly, probably interacts with SEMA5A.

It is found in the cytoplasm. The polypeptide is PDZ domain-containing protein GIPC2 (Gipc2) (Rattus norvegicus (Rat)).